Consider the following 152-residue polypeptide: Orientotoxin-1 (152 aa).

Expressed by the venom gland.

The protein localises to the secreted. The catalysed reaction is a 1-acyl-sn-glycero-3-phosphocholine + H2O = sn-glycerol 3-phosphocholine + a fatty acid + H(+). Its function is as follows. Neurotoxin of presynaptic effect which degrades lysophospholipids. In Vespa orientalis (Oriental hornet), this protein is Orientotoxin-1.